The chain runs to 476 residues: Probable coniferyl aldehyde dehydrogenase (476 aa).

Active-site residues include Glu225 and Cys259.

The protein belongs to the aldehyde dehydrogenase family. In terms of assembly, homodimer.

The catalysed reaction is (E)-coniferaldehyde + NADP(+) + H2O = (E)-ferulate + NADPH + 2 H(+). It carries out the reaction (E)-coniferaldehyde + NAD(+) + H2O = (E)-ferulate + NADH + 2 H(+). This is Probable coniferyl aldehyde dehydrogenase (calB) from Pseudomonas aeruginosa (strain ATCC 15692 / DSM 22644 / CIP 104116 / JCM 14847 / LMG 12228 / 1C / PRS 101 / PAO1).